We begin with the raw amino-acid sequence, 438 residues long: chitinase-like effector (438 aa).

Residues 1–23 (MFTPLSSVTALLALSSAFLGAQA) form the signal peptide. One can recognise a GH18 domain in the interval 54-437 (FIAKGYYTGW…DAIRSGAGLS (384 aa)). Tryptophan 416 is a chitin binding site.

It belongs to the glycosyl hydrolase 18 family.

Its subcellular location is the secreted. In terms of biological role, catalytically impaired chitinase that binds efficiently to chitin, but not to chitosan, xylan, or cellulose. Despite the lack of chitinolytic activity, retains substrate binding specificity and acts as an effector to prevent chitin-triggered immunity by sequestering immunogenic chitin fragments. Does not function in the protection of fungal cell wall against plant hydrolytic enzymes. The chain is chitinase-like effector from Moniliophthora perniciosa (Witches'-broom disease fungus).